The chain runs to 288 residues: Mycothiol S-conjugate amidase (288 aa).

The Zn(2+) site is built by His-12, Asp-15, and His-142.

The protein belongs to the MshB deacetylase family. Mca subfamily. Monomer. The cofactor is Zn(2+).

The catalysed reaction is mycothiol S-conjugate + H2O = an N-acetyl-L-cysteine-S-conjugate + 1D-myo-inositol 2-amino-2-deoxy-alpha-D-glucopyranoside. Partially inhibited by MSH when MSmB (a bimane derivative of MSH) is used as substrate. Its function is as follows. A mycothiol (MSH, N-acetyl-cysteinyl-glucosaminyl-inositol) S-conjugate amidase, it recycles conjugated MSH to the N-acetyl cysteine conjugate and the MSH precursor. Involved in MSH-dependent detoxification of a number of alkylating agents and antibiotics. Activity is specific for the mycothiol moiety. This chain is Mycothiol S-conjugate amidase, found in Mycolicibacterium smegmatis (strain ATCC 700084 / mc(2)155) (Mycobacterium smegmatis).